Reading from the N-terminus, the 801-residue chain is Phenylalanine--tRNA ligase beta subunit (801 aa).

The tRNA-binding domain occupies Ala39–Phe153. The B5 domain occupies Thr406–Thr481. Positions 459, 465, 468, and 469 each coordinate Mg(2+). One can recognise an FDX-ACB domain in the interval Thr708–Arg801.

The protein belongs to the phenylalanyl-tRNA synthetase beta subunit family. Type 1 subfamily. Tetramer of two alpha and two beta subunits. Mg(2+) serves as cofactor.

It is found in the cytoplasm. It carries out the reaction tRNA(Phe) + L-phenylalanine + ATP = L-phenylalanyl-tRNA(Phe) + AMP + diphosphate + H(+). This chain is Phenylalanine--tRNA ligase beta subunit, found in Streptococcus pyogenes serotype M1.